Consider the following 362-residue polypeptide: Peptide chain release factor 1 (362 aa).

At Q237 the chain carries N5-methylglutamine.

It belongs to the prokaryotic/mitochondrial release factor family. In terms of processing, methylated by PrmC. Methylation increases the termination efficiency of RF1.

Its subcellular location is the cytoplasm. Peptide chain release factor 1 directs the termination of translation in response to the peptide chain termination codons UAG and UAA. This chain is Peptide chain release factor 1, found in Vibrio atlanticus (strain LGP32) (Vibrio splendidus (strain Mel32)).